Reading from the N-terminus, the 338-residue chain is Solute carrier family 35 member G6 (338 aa).

Residues methionine 1–leucine 25 are disordered. 9 consecutive transmembrane segments (helical) span residues leucine 40–methionine 60, leucine 67–leucine 87, tyrosine 105–valine 125, cysteine 160–leucine 180, alanine 190–tyrosine 210, threonine 221–leucine 241, cysteine 255–threonine 275, leucine 281–leucine 301, and isoleucine 310–cysteine 330. Residues leucine 49–glycine 174 enclose the EamA 1 domain. The EamA 2 domain occupies tyrosine 272–alanine 325.

Belongs to the SLC35G solute transporter family. As to expression, expressed in placenta and testis.

It is found in the membrane. This Homo sapiens (Human) protein is Solute carrier family 35 member G6 (SLC35G6).